The primary structure comprises 300 residues: Energy-coupling factor transporter ATP-binding protein EcfA2 (300 aa).

The 256-residue stretch at 3 to 258 folds into the ABC transporter domain; it reads IKAKNIVKIY…NKFLIENKML (256 aa). Position 40-47 (40-47) interacts with ATP; the sequence is GQTGSGKT.

Belongs to the ABC transporter superfamily. Energy-coupling factor EcfA family. As to quaternary structure, forms a stable energy-coupling factor (ECF) transporter complex composed of 2 membrane-embedded substrate-binding proteins (S component), 2 ATP-binding proteins (A component) and 2 transmembrane proteins (T component).

It localises to the cell membrane. Its function is as follows. ATP-binding (A) component of a common energy-coupling factor (ECF) ABC-transporter complex. Unlike classic ABC transporters this ECF transporter provides the energy necessary to transport a number of different substrates. This Mesomycoplasma hyopneumoniae (strain 7448) (Mycoplasma hyopneumoniae) protein is Energy-coupling factor transporter ATP-binding protein EcfA2.